A 634-amino-acid chain; its full sequence is DNA-directed RNA polymerase subunit gamma (634 aa).

Residues C74, C76, C89, and C92 each contribute to the Zn(2+) site. D471, D473, and D475 together coordinate Mg(2+).

The protein belongs to the RNA polymerase beta' chain family. RpoC1 subfamily. As to quaternary structure, in cyanobacteria the RNAP catalytic core is composed of 2 alpha, 1 beta, 1 beta', 1 gamma and 1 omega subunit. When a sigma factor is associated with the core the holoenzyme is formed, which can initiate transcription. Requires Mg(2+) as cofactor. Zn(2+) is required as a cofactor.

The catalysed reaction is RNA(n) + a ribonucleoside 5'-triphosphate = RNA(n+1) + diphosphate. In terms of biological role, DNA-dependent RNA polymerase catalyzes the transcription of DNA into RNA using the four ribonucleoside triphosphates as substrates. This is DNA-directed RNA polymerase subunit gamma from Synechococcus sp. (strain CC9311).